A 283-amino-acid polypeptide reads, in one-letter code: Acetylglutamate kinase (283 aa).

Substrate-binding positions include 64 to 65 (GG), arginine 86, and asparagine 181.

This sequence belongs to the acetylglutamate kinase family. ArgB subfamily.

Its subcellular location is the cytoplasm. It carries out the reaction N-acetyl-L-glutamate + ATP = N-acetyl-L-glutamyl 5-phosphate + ADP. Its pathway is amino-acid biosynthesis; L-arginine biosynthesis; N(2)-acetyl-L-ornithine from L-glutamate: step 2/4. Functionally, catalyzes the ATP-dependent phosphorylation of N-acetyl-L-glutamate. The polypeptide is Acetylglutamate kinase (Sulfurovum sp. (strain NBC37-1)).